We begin with the raw amino-acid sequence, 881 residues long: Glutamate--tRNA ligase (881 aa).

Positions 1-480 (MSVRVRLAPS…ILRFKKSIGQ (480 aa)) are glutamyl-tRNA synthetase. Positions 9–19 (PSPTGNLHIGT) match the 'HIGH' region motif. A 'KMSKS' region motif is present at residues 248 to 252 (KLSKR). ATP is bound at residue lysine 251. Residues 481 to 881 (EIEDTKIEDT…IKREIFGKPS (401 aa)) form a unknown region. Positions 488–502 (EDTKKAETTPHKSKG) are enriched in basic and acidic residues. Positions 488–747 (EDTKKAETTP…PTATDAETRE (260 aa)) are disordered. The span at 522 to 548 (QTQTTKPPKKGQTATPVATTPTATDVT) shows a compositional bias: low complexity. Positions 549–562 (ENTSVGTQETQSQI) are enriched in polar residues. Positions 563-576 (TTPVATTPTATDVT) are enriched in low complexity. A compositionally biased stretch (polar residues) spans 577 to 590 (ENTSVGTQETQSQI). The segment covering 591-604 (TTPVATTPTATDVT) has biased composition (low complexity). A compositionally biased stretch (polar residues) spans 605-618 (ENTSVETQETQSQI). Over residues 619-632 (TTPVATTPTATDVT) the composition is skewed to low complexity. A compositionally biased stretch (polar residues) spans 633–646 (ENTSVETQETQSQI). Over residues 647–660 (TTPVATTPTATDVT) the composition is skewed to low complexity. Polar residues predominate over residues 661-674 (ENTSVGTQETQSQI). Residues 675-688 (TTPVATTPTATDVT) show a composition bias toward low complexity. The span at 689–702 (ENTSVETQETQSQI) shows a compositional bias: polar residues. Residues 703–720 (TTPVATTSTATDVTENTS) show a composition bias toward low complexity. Residues 721-730 (VETQETQSQI) are compositionally biased toward polar residues. Positions 731-742 (TTPVATTPTATD) are enriched in low complexity. 2 helical membrane passes run 809-829 (LFGW…VIEA) and 832-852 (GIPI…VWFV).

Belongs to the class-I aminoacyl-tRNA synthetase family. Glutamate--tRNA ligase type 1 subfamily. As to quaternary structure, monomer.

Its subcellular location is the cytoplasm. It localises to the cell membrane. It carries out the reaction tRNA(Glu) + L-glutamate + ATP = L-glutamyl-tRNA(Glu) + AMP + diphosphate. In terms of biological role, catalyzes the attachment of glutamate to tRNA(Glu) in a two-step reaction: glutamate is first activated by ATP to form Glu-AMP and then transferred to the acceptor end of tRNA(Glu). The protein is Glutamate--tRNA ligase (gltX) of Trichodesmium erythraeum (strain IMS101).